A 300-amino-acid chain; its full sequence is 33 kDa chaperonin (300 aa).

Intrachain disulfides connect Cys235–Cys237 and Cys269–Cys272.

Belongs to the HSP33 family. Post-translationally, under oxidizing conditions two disulfide bonds are formed involving the reactive cysteines. Under reducing conditions zinc is bound to the reactive cysteines and the protein is inactive.

It localises to the cytoplasm. Redox regulated molecular chaperone. Protects both thermally unfolding and oxidatively damaged proteins from irreversible aggregation. Plays an important role in the bacterial defense system toward oxidative stress. The polypeptide is 33 kDa chaperonin (Pseudomonas fluorescens (strain ATCC BAA-477 / NRRL B-23932 / Pf-5)).